Reading from the N-terminus, the 701-residue chain is Elongation factor G (701 aa).

The 277-residue stretch at 11–287 (TKVRNIGIMA…AVIDYLPSPL (277 aa)) folds into the tr-type G domain. GTP contacts are provided by residues 20-27 (AHIDAGKT), 84-88 (DTPGH), and 138-141 (NKMD).

This sequence belongs to the TRAFAC class translation factor GTPase superfamily. Classic translation factor GTPase family. EF-G/EF-2 subfamily.

The protein localises to the cytoplasm. Catalyzes the GTP-dependent ribosomal translocation step during translation elongation. During this step, the ribosome changes from the pre-translocational (PRE) to the post-translocational (POST) state as the newly formed A-site-bound peptidyl-tRNA and P-site-bound deacylated tRNA move to the P and E sites, respectively. Catalyzes the coordinated movement of the two tRNA molecules, the mRNA and conformational changes in the ribosome. The sequence is that of Elongation factor G from Mycobacterium marinum (strain ATCC BAA-535 / M).